A 507-amino-acid polypeptide reads, in one-letter code: ATP synthase subunit alpha (507 aa).

Position 169 to 176 (169 to 176 (GDRQIGKT)) interacts with ATP.

Belongs to the ATPase alpha/beta chains family. F-type ATPases have 2 components, CF(1) - the catalytic core - and CF(0) - the membrane proton channel. CF(1) has five subunits: alpha(3), beta(3), gamma(1), delta(1), epsilon(1). CF(0) has three main subunits: a(1), b(2) and c(9-12). The alpha and beta chains form an alternating ring which encloses part of the gamma chain. CF(1) is attached to CF(0) by a central stalk formed by the gamma and epsilon chains, while a peripheral stalk is formed by the delta and b chains.

The protein resides in the cell inner membrane. It catalyses the reaction ATP + H2O + 4 H(+)(in) = ADP + phosphate + 5 H(+)(out). Functionally, produces ATP from ADP in the presence of a proton gradient across the membrane. The alpha chain is a regulatory subunit. This Desulfotalea psychrophila (strain LSv54 / DSM 12343) protein is ATP synthase subunit alpha.